Here is a 349-residue protein sequence, read N- to C-terminus: ATP phosphoribosyltransferase regulatory subunit (349 aa).

The segment at 327 to 349 is disordered; sequence GRGRGVRPRRASARGGRARARPR. The span at 330 to 349 shows a compositional bias: basic residues; it reads RGVRPRRASARGGRARARPR.

The protein belongs to the class-II aminoacyl-tRNA synthetase family. HisZ subfamily. As to quaternary structure, heteromultimer composed of HisG and HisZ subunits.

The protein resides in the cytoplasm. Its pathway is amino-acid biosynthesis; L-histidine biosynthesis; L-histidine from 5-phospho-alpha-D-ribose 1-diphosphate: step 1/9. Required for the first step of histidine biosynthesis. May allow the feedback regulation of ATP phosphoribosyltransferase activity by histidine. This Anaeromyxobacter dehalogenans (strain 2CP-1 / ATCC BAA-258) protein is ATP phosphoribosyltransferase regulatory subunit.